The chain runs to 135 residues: Large ribosomal subunit protein uL16c (135 aa).

The protein belongs to the universal ribosomal protein uL16 family. In terms of assembly, part of the 50S ribosomal subunit.

It is found in the plastid. The protein resides in the chloroplast. The chain is Large ribosomal subunit protein uL16c from Vitis vinifera (Grape).